Here is a 167-residue protein sequence, read N- to C-terminus: Signal peptidase complex catalytic subunit SEC11 (167 aa).

Over 1 to 9 (MNLRFELQK) the chain is Cytoplasmic. Residues 10 to 30 (LLNVCFLFASAYMFWQGLAIA) form a helical; Signal-anchor for type II membrane protein membrane-spanning segment. Residues 31–167 (TNSASPIVVV…LGLSALLGGE (137 aa)) are Lumenal-facing. Catalysis depends on charge relay system residues Ser44, His83, and Asp109. Asn121 carries N-linked (GlcNAc...) asparagine glycosylation. The segment at 153–164 (ALLGMLGLSALL) is C-terminal short (CTS) helix.

Belongs to the peptidase S26B family. In terms of assembly, component of the signal peptidase complex (SPC) composed of a catalytic subunit SEC11 and three accessory subunits SPC1, SPC2 and SPC3. The complex induces a local thinning of the ER membrane which is used to measure the length of the signal peptide (SP) h-region of protein substrates. This ensures the selectivity of the complex towards h-regions shorter than 18-20 amino acids. SPC associates with the translocon complex.

It localises to the endoplasmic reticulum membrane. The catalysed reaction is Cleavage of hydrophobic, N-terminal signal or leader sequences from secreted and periplasmic proteins.. Its function is as follows. Catalytic component of the signal peptidase complex (SPC) which catalyzes the cleavage of N-terminal signal sequences from nascent proteins as they are translocated into the lumen of the endoplasmic reticulum. Specifically cleaves N-terminal signal peptides that contain a hydrophobic alpha-helix (h-region) shorter than 18-20 amino acids. This Saccharomyces cerevisiae (strain Lalvin QA23) (Baker's yeast) protein is Signal peptidase complex catalytic subunit SEC11 (SEC11).